The sequence spans 285 residues: 4-diphosphocytidyl-2-C-methyl-D-erythritol kinase (285 aa).

Residue Lys-10 is part of the active site. Residue 93-103 (PIGGGLGGGSS) coordinates ATP. Asp-135 is an active-site residue.

It belongs to the GHMP kinase family. IspE subfamily.

The catalysed reaction is 4-CDP-2-C-methyl-D-erythritol + ATP = 4-CDP-2-C-methyl-D-erythritol 2-phosphate + ADP + H(+). The protein operates within isoprenoid biosynthesis; isopentenyl diphosphate biosynthesis via DXP pathway; isopentenyl diphosphate from 1-deoxy-D-xylulose 5-phosphate: step 3/6. Catalyzes the phosphorylation of the position 2 hydroxy group of 4-diphosphocytidyl-2C-methyl-D-erythritol. This chain is 4-diphosphocytidyl-2-C-methyl-D-erythritol kinase, found in Ruthia magnifica subsp. Calyptogena magnifica.